The sequence spans 229 residues: Extracellular endonuclease (229 aa).

An N-terminal signal peptide occupies residues 1-19 (MSARFIAVFCLFFTVTAHA). The tract at residues 69–95 (RADASNGNTSSRPGRSGISASAGKPVG) is disordered. Residues 71 to 81 (DASNGNTSSRP) are compositionally biased toward polar residues.

This sequence belongs to the EndA/NucM nuclease family.

It is found in the secreted. This chain is Extracellular endonuclease (endX), found in Pseudomonas fluorescens biotype A.